The chain runs to 374 residues: UDP-N-acetylglucosamine--N-acetylmuramyl-(pentapeptide) pyrophosphoryl-undecaprenol N-acetylglucosamine transferase (374 aa).

Residues 13–15 (TGG), Asn124, Arg165, Ser193, and Gln294 contribute to the UDP-N-acetyl-alpha-D-glucosamine site.

It belongs to the glycosyltransferase 28 family. MurG subfamily.

It localises to the cell inner membrane. It catalyses the reaction di-trans,octa-cis-undecaprenyl diphospho-N-acetyl-alpha-D-muramoyl-L-alanyl-D-glutamyl-meso-2,6-diaminopimeloyl-D-alanyl-D-alanine + UDP-N-acetyl-alpha-D-glucosamine = di-trans,octa-cis-undecaprenyl diphospho-[N-acetyl-alpha-D-glucosaminyl-(1-&gt;4)]-N-acetyl-alpha-D-muramoyl-L-alanyl-D-glutamyl-meso-2,6-diaminopimeloyl-D-alanyl-D-alanine + UDP + H(+). Its pathway is cell wall biogenesis; peptidoglycan biosynthesis. Its function is as follows. Cell wall formation. Catalyzes the transfer of a GlcNAc subunit on undecaprenyl-pyrophosphoryl-MurNAc-pentapeptide (lipid intermediate I) to form undecaprenyl-pyrophosphoryl-MurNAc-(pentapeptide)GlcNAc (lipid intermediate II). This Rhizobium johnstonii (strain DSM 114642 / LMG 32736 / 3841) (Rhizobium leguminosarum bv. viciae) protein is UDP-N-acetylglucosamine--N-acetylmuramyl-(pentapeptide) pyrophosphoryl-undecaprenol N-acetylglucosamine transferase.